Here is a 404-residue protein sequence, read N- to C-terminus: Argininosuccinate synthase (404 aa).

Position 7 to 15 (7 to 15 (AYSGGLDTS)) interacts with ATP. L-citrulline contacts are provided by Tyr-85 and Ser-90. Gly-115 contributes to the ATP binding site. L-aspartate is bound by residues Thr-117, Asn-121, and Asp-122. Asn-121 provides a ligand contact to L-citrulline. L-citrulline is bound by residues Arg-125, Ser-178, Ser-187, Glu-264, and Tyr-276.

It belongs to the argininosuccinate synthase family. Type 1 subfamily. As to quaternary structure, homotetramer.

It is found in the cytoplasm. It catalyses the reaction L-citrulline + L-aspartate + ATP = 2-(N(omega)-L-arginino)succinate + AMP + diphosphate + H(+). Its pathway is amino-acid biosynthesis; L-arginine biosynthesis; L-arginine from L-ornithine and carbamoyl phosphate: step 2/3. This chain is Argininosuccinate synthase, found in Rhodopirellula baltica (strain DSM 10527 / NCIMB 13988 / SH1).